The following is a 185-amino-acid chain: MINEIRKDAEVRMEKCLEAFQNHISKIRTGRASPSILDGIQVEYYGTATPLRQLANIVVEDSRTLALTVFDRSLSAAVEKAIMTSDLGLNPSSAGTVIRVPLPALTEERRKDLIKVVRAEAEQGRVSIRNVRRDANDKVKALLKDKEISEDEDRRSQDDVQKLTDAYIKKVDAALAVKEAELMDF.

Belongs to the RRF family.

The protein localises to the cytoplasm. In terms of biological role, responsible for the release of ribosomes from messenger RNA at the termination of protein biosynthesis. May increase the efficiency of translation by recycling ribosomes from one round of translation to another. In Yersinia pseudotuberculosis serotype O:1b (strain IP 31758), this protein is Ribosome-recycling factor.